The following is a 1548-amino-acid chain: Dual oxidase 2 (1548 aa).

The first 25 residues, 1–25 (MLRARPEALMLLGALLTGSLGPSGN), serve as a signal peptide directing secretion. Residues 26-601 (QDALSLPWEV…EGSSPGFAIT (576 aa)) are Extracellular-facing. The peroxidase-like; mediates peroxidase activity stretch occupies residues 30-596 (SLPWEVQRYD…VLDFFEGSSP (567 aa)). N-linked (GlcNAc...) asparagine glycans are attached at residues Asn-100, Asn-348, Asn-382, Asn-455, and Asn-537. The cysteines at positions 124 and 1162 are disulfide-linked. The chain crosses the membrane as a helical span at residues 602 to 622 (IIALCCLPLVSLLLSGVVAYF). The Cytoplasmic portion of the chain corresponds to 623–1041 (RGREHKKLQK…KRFVENYRRH (419 aa)). EF-hand domains lie at 819 to 854 (PQDMFVESMFSLADKDGNGYLSFREFLDILVVFMKG), 855 to 890 (SPEDKSRLMFTMYDLDENGFLSKDEFFTMMRSFIEI), and 899 to 934 (QLAEVVESMFRESGFQDKEELTWEDFHFMLRDHDSE). The Ca(2+) site is built by Asp-832, Asp-834, Asn-836, Tyr-838, Glu-843, Asp-868, Asp-870, Asn-872, and Glu-879. An interaction with TXNDC11 region spans residues 960 to 1245 (ISCRVSFITR…GSYALIQLPT (286 aa)). The tract at residues 971–991 (PGERSHPQGLGPPAPEAPELG) is disordered. A helical membrane pass occupies residues 1042-1062 (IVCVAIFSAICVGVFADRAYY). The Extracellular portion of the chain corresponds to 1063 to 1076 (YGFASPPSDIAQTT). A helical transmembrane segment spans residues 1077-1097 (LVGIILSRGTAASVSFMFSYI). The 183-residue stretch at 1084–1266 (RGTAASVSFM…YGGDKLVSLS (183 aa)) folds into the Ferric oxidoreductase domain. The Cytoplasmic portion of the chain corresponds to 1098 to 1128 (LLTMCRNLITFLRETFLNRYVPFDAAVDFHR). A helical membrane pass occupies residues 1129–1151 (WIAMAAVVLAILHSAGHAVNVYI). The Extracellular portion of the chain corresponds to 1152-1185 (FSVSPLSLLACIFPNVFVNDGSKLPQKFYWWFFQ). A helical membrane pass occupies residues 1186–1206 (TVPGMTGVLLLLVLAIMYVFA). The Cytoplasmic portion of the chain corresponds to 1207 to 1223 (SHHFRRRSFRGFWLTHH). 2 consecutive transmembrane segments (helical) span residues 1224 to 1244 (LYILLYALLIIHGSYALIQLP) and 1245 to 1265 (TFHIYFLVPAIIYGGDKLVSL). Residues 1266–1548 (SRKKVEISVV…AHFMHHYENF (283 aa)) are Cytoplasmic-facing. Residues 1267-1373 (RKKVEISVVK…DGPFGEGHQE (107 aa)) form the FAD-binding FR-type domain.

The protein in the N-terminal section; belongs to the peroxidase family. Heterodimer with DUOXA2; disulfide-linked. Interacts with TXNDC11, TPO and CYBA. N-glycosylated. In terms of tissue distribution, expressed in colon, small intestine, duodenum and tracheal surface epithelial cells (at protein level). Expressed in thyrocytes. Also detected in kidney, liver, lung, pancreas, prostate, salivary glands, rectum and testis.

Its subcellular location is the apical cell membrane. The protein resides in the cell junction. It catalyses the reaction NADH + O2 + H(+) = H2O2 + NAD(+). The catalysed reaction is NADPH + O2 + H(+) = H2O2 + NADP(+). Its pathway is hormone biosynthesis; thyroid hormone biosynthesis. Its activity is regulated as follows. Peroxidase activity is inhibited by aminobenzohydrazide. The NADPH oxidase activity is calcium-dependent. Its function is as follows. Generates hydrogen peroxide which is required for the activity of thyroid peroxidase/TPO and lactoperoxidase/LPO. Plays a role in thyroid hormones synthesis and lactoperoxidase-mediated antimicrobial defense at the surface of mucosa. May have its own peroxidase activity through its N-terminal peroxidase-like domain. The protein is Dual oxidase 2 (DUOX2) of Homo sapiens (Human).